Here is a 260-residue protein sequence, read N- to C-terminus: MPTFYDKTFTSRLLIGTALYPSPAIMQDAIRASGAEIVTVSLRREAAGGKSGDAFWKLIRELNVTVLPNTAGCRSVREAVTTAKLARELFGTSWIKLEVIADNDTLQPDVVGLVEAATILIKDGFEVFPYCTEDLSVATRLVDAGCKVVMPWAAPIGSAKGIINRDALKLLRDRLPDITLVVDAGLGAPSHAAEALELGYDAVLLNTAVAKAADPVAMARAFRLGCDAGRTAYEAGLMDARDFASPSTPVVGTPFWHAVS.

The active-site Schiff-base intermediate with DXP is Lys-96. 1-deoxy-D-xylulose 5-phosphate contacts are provided by residues Gly-157, 184–185 (AG), and 206–207 (NT).

The protein belongs to the ThiG family. Homotetramer. Forms heterodimers with either ThiH or ThiS.

The protein resides in the cytoplasm. The enzyme catalyses [ThiS sulfur-carrier protein]-C-terminal-Gly-aminoethanethioate + 2-iminoacetate + 1-deoxy-D-xylulose 5-phosphate = [ThiS sulfur-carrier protein]-C-terminal Gly-Gly + 2-[(2R,5Z)-2-carboxy-4-methylthiazol-5(2H)-ylidene]ethyl phosphate + 2 H2O + H(+). Its pathway is cofactor biosynthesis; thiamine diphosphate biosynthesis. Catalyzes the rearrangement of 1-deoxy-D-xylulose 5-phosphate (DXP) to produce the thiazole phosphate moiety of thiamine. Sulfur is provided by the thiocarboxylate moiety of the carrier protein ThiS. In vitro, sulfur can be provided by H(2)S. The chain is Thiazole synthase from Bradyrhizobium sp. (strain BTAi1 / ATCC BAA-1182).